Here is a 271-residue protein sequence, read N- to C-terminus: MEVKIFKLSDKYMSFEIDGITPSQANALRRTLINDIPKLAIENVTFHHGEIRDAEGNVYDSSLPLFDEMVAHRLGLIPLKTDLSLNFRDQCSCGGKGCSLCTVTYSINKIGPASVMSGDIQAISHPDLVPVDPDIPIVKLGAKQAILITAEAILGTAKEHAKWQVTSGVAYKYHREFEVNKKLFEDWAKIKERCPKSVLSEDENTIVFTDDYGCNDLSILFESDGVQIKEDDSRFIFHFETDGSLTAEETLSYALNRLMDRWGILVESLSE.

The protein belongs to the archaeal Rpo3/eukaryotic RPB3 RNA polymerase subunit family. Part of the RNA polymerase complex.

Its subcellular location is the cytoplasm. The enzyme catalyses RNA(n) + a ribonucleoside 5'-triphosphate = RNA(n+1) + diphosphate. Its function is as follows. DNA-dependent RNA polymerase (RNAP) catalyzes the transcription of DNA into RNA using the four ribonucleoside triphosphates as substrates. In Thermoplasma volcanium (strain ATCC 51530 / DSM 4299 / JCM 9571 / NBRC 15438 / GSS1), this protein is DNA-directed RNA polymerase subunit Rpo3.